Reading from the N-terminus, the 110-residue chain is uncharacterized protein (110 aa).

A signal peptide spans 1 to 23 (MKRITINIITMFIAAAVISLTGT).

This is an uncharacterized protein from Bacillus subtilis (strain 168).